A 360-amino-acid chain; its full sequence is Phospho-N-acetylmuramoyl-pentapeptide-transferase (360 aa).

The Periplasmic portion of the chain corresponds to 1–25; that stretch reads MLVWLAEHLVKYYSGFNVFSYLTFR. The chain crosses the membrane as a helical span at residues 26–46; sequence AIVSLLTALFISLWMGPRMIA. Residues 47–71 lie on the Cytoplasmic side of the membrane; the sequence is RLQKLSFGQVVRNDGPESHFSKRGT. The chain crosses the membrane as a helical span at residues 72–92; that stretch reads PTMGGIMILTAIVISVLLWAY. Proline 93 is a topological domain (periplasmic). The chain crosses the membrane as a helical span at residues 94 to 114; the sequence is SNPYVWCVLVVLIGYGIIGFV. Residues 115–131 are Cytoplasmic-facing; sequence DDYRKVVRKDTKGLIAR. The helical transmembrane segment at 132–152 threads the bilayer; sequence WKYFWMSVIALGVAFALYLVG. The Periplasmic portion of the chain corresponds to 153–167; the sequence is KDTPATQLVVPFFKD. A helical transmembrane segment spans residues 168–188; sequence VMPQLGLFYILLSYFVIVGTG. Residues 189 to 198 lie on the Cytoplasmic side of the membrane; sequence NAVNLTDGLD. A helical transmembrane segment spans residues 199–219; the sequence is GLAIMPTVFVAAGFALVAWAT. Residues 220–235 lie on the Periplasmic side of the membrane; it reads GNMNFANYLHIPYLRH. Residues 236-256 traverse the membrane as a helical segment; the sequence is AGELVIVCTAIVGAGLGFLWF. Residues 257 to 262 are Cytoplasmic-facing; that stretch reads NTYPAQ. A helical transmembrane segment spans residues 263–283; the sequence is VFMGDVGSLALGGALGIIAVL. Over 284-287 the chain is Periplasmic; it reads LRQE. Residues 288–308 traverse the membrane as a helical segment; the sequence is FLLVIMGGVFVVETLSVILQV. The Cytoplasmic portion of the chain corresponds to 309–337; the sequence is GSFKLRGQRIFRMAPIHHHYELKGWPEPR. Residues 338–358 traverse the membrane as a helical segment; the sequence is VIVRFWIISLMLVLIGLATLK. At 359–360 the chain is on the periplasmic side; it reads VR.

Belongs to the glycosyltransferase 4 family. MraY subfamily. Mg(2+) is required as a cofactor.

It localises to the cell inner membrane. It catalyses the reaction UDP-N-acetyl-alpha-D-muramoyl-L-alanyl-gamma-D-glutamyl-meso-2,6-diaminopimeloyl-D-alanyl-D-alanine + di-trans,octa-cis-undecaprenyl phosphate = di-trans,octa-cis-undecaprenyl diphospho-N-acetyl-alpha-D-muramoyl-L-alanyl-D-glutamyl-meso-2,6-diaminopimeloyl-D-alanyl-D-alanine + UMP. Its pathway is cell wall biogenesis; peptidoglycan biosynthesis. Its function is as follows. Catalyzes the initial step of the lipid cycle reactions in the biosynthesis of the cell wall peptidoglycan: transfers peptidoglycan precursor phospho-MurNAc-pentapeptide from UDP-MurNAc-pentapeptide onto the lipid carrier undecaprenyl phosphate, yielding undecaprenyl-pyrophosphoryl-MurNAc-pentapeptide, known as lipid I. In Salmonella agona (strain SL483), this protein is Phospho-N-acetylmuramoyl-pentapeptide-transferase.